We begin with the raw amino-acid sequence, 564 residues long: MSTLKITGMTCDSCAVHVKDALEKVPGVQSADVSYAKGSAKLAIEVGTSPDALTAAVAGLGYRATLADAPSVSTPGGLLDKMRDLLGRNDKTGSSGALHIAVIGSGGAAMAAALKAVEQGARVTLIERGTIGGTCVNVGCVPSKIMIRAAHIAHLRRESPFDGGIAATTPTIQRTALLAQQQARVDELRHAKYEGILEGNPAITVLHGSARFKDNRNLIVQLNDGGERVVAFDRCLIATGASPAVPPIPGLKDTPYWTSTEALVSETIPKRLAVIGSSVVALELAQAFARLGAKVTILARSTLFFREDPAIGEAVTAAFRMEGIEVREHTQASQVAYINGVRDGEFVLTTAHGELRADKLLVATGRAPNTRKLALDATGVTLTPQGAIVIDPGMRTSVEHIYAAGDCTDQPQFVYVAAAAGTRAAINMTGGDAALNLTAMPAVVFTDPQVATVGYSEAEAHHDGIKTDSRTLTLDNVPRALANFDTRGFIKLVVEEGSGRLIGVQAVAPEAGELIQTAALAIRNRMTVQELADQLFPYLTMVEGLKLAAQTFNKDVKQLSCCAG.

Residues 1–65 (MSTLKITGMT…AVAGLGYRAT (65 aa)) enclose the HMA domain. Residues Cys-11 and Cys-14 each contribute to the a metal cation site. Residues Ala-109, Gly-129, and Thr-134 each contribute to the FAD site. A disulfide bridge links Cys-135 with Cys-140. 4 residues coordinate FAD: Lys-144, Ala-210, Asp-406, and Val-414. Cys-561 and Cys-562 together coordinate Hg(2+).

The protein belongs to the class-I pyridine nucleotide-disulfide oxidoreductase family. In terms of assembly, homodimer. FAD serves as cofactor.

It catalyses the reaction Hg + NADP(+) + H(+) = Hg(2+) + NADPH. Resistance to Hg(2+) in bacteria appears to be governed by a specialized system which includes mercuric reductase. MerA protein is responsible for volatilizing mercury as Hg(0). The protein is Mercuric reductase (merA) of Shigella flexneri.